A 112-amino-acid polypeptide reads, in one-letter code: Histone H3-4 (112 aa).

A disordered region spans residues 1–31; that stretch reads QTGAKAPRKALANKAARKTAPADGGVKKPHR.

The protein belongs to the histone H3 family. The nucleosome is a histone octamer containing two molecules each of H2A, H2B, H3 and H4 assembled in one H3-H4 heterotetramer and two H2A-H2B heterodimers. The octamer wraps approximately 147 bp of DNA.

Its subcellular location is the nucleus. The protein resides in the chromosome. In terms of biological role, core component of nucleosome. Nucleosomes wrap and compact DNA into chromatin, limiting DNA accessibility to the cellular machineries which require DNA as a template. Histones thereby play a central role in transcription regulation, DNA repair, DNA replication and chromosomal stability. DNA accessibility is regulated via a complex set of post-translational modifications of histones, also called histone code, and nucleosome remodeling. In Stylonychia lemnae (Ciliate), this protein is Histone H3-4 (H3-4).